The following is a 220-amino-acid chain: Thymidylate kinase (220 aa).

Residue 10-17 (GIDGCGKS) coordinates ATP.

This sequence belongs to the thymidylate kinase family.

The catalysed reaction is dTMP + ATP = dTDP + ADP. Functionally, phosphorylation of dTMP to form dTDP in both de novo and salvage pathways of dTTP synthesis. The chain is Thymidylate kinase from Prochlorococcus marinus (strain SARG / CCMP1375 / SS120).